The primary structure comprises 518 residues: MGALARALLLPLLAQWLLRAAPELAPAPFTLPLRVAAATNRVVAPTPGPGTPAERHADGLALALEPALASPAGAANFLAMVDNLQGDSGRGYYLEMLIGTPPQKLQILVDTGSSNFAVAGTPHSYIDTYFDTERSSTYRSKGFDVTVKYTQGSWTGFVGEDLVTIPKGFNTSFLVNIATIFESENFFLPGIKWNGILGLAYATLAKPSSSLETFFDSLVTQANIPNVFSMQMCGAGLPVAGSGTNGGSLVLGGIEPSLYKGDIWYTPIKEEWYYQIEILKLEIGGQSLNLDCREYNADKAIVDSGTTLLRLPQKVFDAVVEAVARASLIPEFSDGFWTGSQLACWTNSETPWSYFPKISIYLRDENSSRSFRITILPQLYIQPMMGAGLNYECYRFGISPSTNALVIGATVMEGFYVIFDRAQKRVGFAASPCAEIAGAAVSEISGPFSTEDVASNCVPAQSLSEPILWIVSYALMSVCGAILLVLIVLLLLPFRCQRRPRDPEVVNDESSLVRHRWK.

The first 20 residues, 1-20 (MGALARALLLPLLAQWLLRA), serve as a signal peptide directing secretion. The propeptide occupies 21–62 (APELAPAPFTLPLRVAAATNRVVAPTPGPGTPAERHADGLAL). Topologically, residues 21–473 (APELAPAPFT…SEPILWIVSY (453 aa)) are extracellular. The Peptidase A1 domain maps to 92–429 (YYLEMLIGTP…DRAQKRVGFA (338 aa)). Aspartate 110 is an active-site residue. A glycan (N-linked (GlcNAc...) asparagine) is linked at asparagine 170. Intrachain disulfides connect cysteine 233-cysteine 433, cysteine 292-cysteine 457, and cysteine 344-cysteine 393. The active site involves aspartate 303. Asparagine 366 carries an N-linked (GlcNAc...) asparagine glycan. A helical transmembrane segment spans residues 474 to 494 (ALMSVCGAILLVLIVLLLLPF). The Cytoplasmic segment spans residues 495–518 (RCQRRPRDPEVVNDESSLVRHRWK).

This sequence belongs to the peptidase A1 family. In terms of assembly, monomer. Interacts with RTN3 and RTN4. Undergoes autoproteolytic cleavage. Post-translationally, glycosylated. As to expression, brain. Present in neurons within the hippocampus, frontal cortex and temporal cortex (at protein level). Expressed at low levels in most peripheral tissues and at higher levels in colon, kidney, pancreas, placenta, prostate, stomach and trachea. Expressed at low levels in the brain. Found in spinal cord, medulla oblongata, substantia nigra and locus coruleus. Expressed in the ductal epithelium of both normal and malignant prostate.

It localises to the cell membrane. Its subcellular location is the golgi apparatus. It is found in the endoplasmic reticulum. The protein localises to the endosome. The protein resides in the melanosome. It catalyses the reaction Broad endopeptidase specificity. Cleaves Glu-Val-Asn-Leu-|-Asp-Ala-Glu-Phe in the Swedish variant of Alzheimer's amyloid precursor protein.. Responsible for the proteolytic processing of the amyloid precursor protein (APP). Cleaves APP, between residues 690 and 691, leading to the generation and extracellular release of beta-cleaved soluble APP, and a corresponding cell-associated C-terminal fragment which is later released by gamma-secretase. It has also been shown that it can cleave APP between residues 671 and 672. Involved in the proteolytic shedding of PMEL at early stages of melanosome biogenesis. Cleaves PMEL within the M-beta fragment to release the amyloidogenic PMEL luminal fragment containing M-alpha and a small portion of M-beta N-terminus. This is a prerequisite step for subsequent processing and assembly of PMEL fibrils into amyloid sheets. Responsible also for the proteolytic processing of CLTRN in pancreatic beta cells. This Homo sapiens (Human) protein is Beta-secretase 2 (BACE2).